The following is an 853-amino-acid chain: Neural cell adhesion molecule 1 (853 aa).

An N-terminal signal peptide occupies residues 1-19 (MLQTKNLIWTLFFLGTAVS). Ig-like C2-type domains lie at 20–111 (LQVD…ATVN), 116–205 (QKLM…KDIQ), 212–300 (PTVQ…ASIH), 307–412 (PKIT…LEVQ), and 415–500 (PKLQ…ESLE). Topologically, residues 20-719 (LQVDIVPSQG…NGSPTSGLST (700 aa)) are extracellular. 2 disulfide bridges follow: cysteine 41–cysteine 96 and cysteine 139–cysteine 189. Heparin is bound by residues 152–156 (KHKGR) and 161–165 (KKDVR). An N-linked (GlcNAc...) asparagine glycan is attached at asparagine 222. The cysteines at positions 235 and 286 are disulfide-linked. 5 N-linked (GlcNAc...) asparagine glycosylation sites follow: asparagine 314, asparagine 346, asparagine 432, asparagine 458, and asparagine 487. Residues cysteine 328 and cysteine 394 are joined by a disulfide bond. A disulfide bond links cysteine 435 and cysteine 488. Fibronectin type-III domains follow at residues 508-607 (TPSS…TQPV) and 609-704 (EPSA…SAQP). A helical transmembrane segment spans residues 720–737 (GAIVGILVVTFVLLLVAV). Over 738–853 (DVTCYFLNKC…TQIKVNESKA (116 aa)) the chain is Cytoplasmic. Residues 764–853 (GAKGKDMEEG…TQIKVNESKA (90 aa)) form a disordered region. Basic and acidic residues-rich tracts occupy residues 766 to 807 (KGKD…HTEP) and 815 to 829 (EPEKGPVEAKPETET). Phosphoserine is present on residues serine 778 and serine 782. The span at 838–853 (TVPNDATQIKVNESKA) shows a compositional bias: polar residues.

As to quaternary structure, interacts with MDK. Found in a complex with SLC39A6, SLC39A10 and with NCAM1; this complex controls NCAM1 phosphorylation and integration into focal adhesion complexes during epithelial-tomesenchymal transition. Interacts with synaptic plasticity regulator PANTS. Polysialylated by ST8SIA2 and ST8SIA4. Polysialylation modulates cell interactions by confering both attractive and repulsive properties that are highly regulated by ST8SIA2 and ST8SIA4. Polysialylation is formed on a-2,3-linked sialic acid of core glycans.

It is found in the cell membrane. Its function is as follows. This protein is a cell adhesion molecule involved in neuron-neuron adhesion, neurite fasciculation, outgrowth of neurites, etc. The polypeptide is Neural cell adhesion molecule 1 (Bos taurus (Bovine)).